The following is a 459-amino-acid chain: MLKIYNTLKREKEEFKPINPNQVGMYVCGVTVYDLCHFGHGRTFVSFDVIARYLRYLGYNLRYVRNITDVDDKIIKRALENNETCDQLVDRMIAEMHKDFDDLNILRPDVEPRATKHIPEIVAMVEKLIANGHAYVAADGDVMFDVESFKKYGALSRQNLEQLQAGARVEIKSVKKNPMDFVLWKMSKEGEPSWQSPWGNGRPGWHIECSAMNSKELGEHFDIHGGGSDLMFPHHENEIAQSCCAHGGDYVNYWLHTGMLTIDDEKMSKSLGNFFTIRTMLEKYESETLRYFFLTAHYRSLLNYSLDNLDLARSALERLYTSLRGCDLSVEVAGGEQYVEAFKAAMDDDFNTPGALAVLFEIAREVNKLKTEDMAKANGLAVRLKELAGVLGLLYQDPEAFLQGDADNDEVAEIEALIKQRNEAKAAKNWAVADEVRDKLKAMNIVLEDTPNGTTWRKA.

Cys-28 contributes to the Zn(2+) binding site. The 'HIGH' region signature appears at 30-40 (VTVYDLCHFGH). Positions 209, 234, and 238 each coordinate Zn(2+). A 'KMSKS' region motif is present at residues 266–270 (KMSKS). Lys-269 is an ATP binding site.

The protein belongs to the class-I aminoacyl-tRNA synthetase family. Monomer. Zn(2+) serves as cofactor.

The protein resides in the cytoplasm. The enzyme catalyses tRNA(Cys) + L-cysteine + ATP = L-cysteinyl-tRNA(Cys) + AMP + diphosphate. The chain is Cysteine--tRNA ligase from Actinobacillus pleuropneumoniae serotype 5b (strain L20).